The chain runs to 106 residues: Diptericin A (106 aa).

A signal peptide spans 1–19; the sequence is MQFTIAVALLCCAIASTLA. The propeptide at 20-23 is removed by a dipeptidylpeptidase; that stretch reads YPMP.

The protein belongs to the attacin/sarcotoxin-2 family.

It localises to the secreted. Antimicrobial peptide required to resist Gram-negative bacterial infections, regulated by Dredd. The protein is Diptericin A of Drosophila melanogaster (Fruit fly).